The chain runs to 319 residues: tRNA pseudouridine synthase B (319 aa).

The Nucleophile role is filled by D47.

It belongs to the pseudouridine synthase TruB family. Type 1 subfamily.

The catalysed reaction is uridine(55) in tRNA = pseudouridine(55) in tRNA. Functionally, responsible for synthesis of pseudouridine from uracil-55 in the psi GC loop of transfer RNAs. The chain is tRNA pseudouridine synthase B from Pseudoalteromonas translucida (strain TAC 125).